We begin with the raw amino-acid sequence, 241 residues long: Large ribosomal subunit protein uL1 (241 aa).

Belongs to the universal ribosomal protein uL1 family. Part of the 50S ribosomal subunit.

In terms of biological role, binds directly to 23S rRNA. The L1 stalk is quite mobile in the ribosome, and is involved in E site tRNA release. Its function is as follows. Protein L1 is also a translational repressor protein, it controls the translation of the L11 operon by binding to its mRNA. The sequence is that of Large ribosomal subunit protein uL1 from Thermomicrobium roseum (strain ATCC 27502 / DSM 5159 / P-2).